Consider the following 386-residue polypeptide: Putative matrix metalloproteinase (386 aa).

The signal sequence occupies residues 1–34 (MPTAHFQHSIRYLNVTNMLIFSIISFLLIYQTNS). N-linked (GlcNAc...) asparagine; by host glycans are attached at residues Asn-14 and Asn-58. His-186 serves as a coordination point for Zn(2+). Residue Glu-187 is part of the active site. Positions 190 and 196 each coordinate Zn(2+). The interval 235 to 258 (NEQSTHQSTRHRPHRRPSPDGSCR) is disordered.

This sequence belongs to the peptidase M10A family. The cofactor is Zn(2+).

In Spodoptera frugiperda (Fall armyworm), this protein is Putative matrix metalloproteinase.